The sequence spans 319 residues: Beta-ketoacyl-[acyl-carrier-protein] synthase III (319 aa).

Active-site residues include C113 and H246. The interval 247-251 (QANIR) is ACP-binding. N276 is a catalytic residue.

The protein belongs to the thiolase-like superfamily. FabH family. As to quaternary structure, homodimer.

The protein resides in the cytoplasm. The enzyme catalyses malonyl-[ACP] + acetyl-CoA + H(+) = 3-oxobutanoyl-[ACP] + CO2 + CoA. It participates in lipid metabolism; fatty acid biosynthesis. Functionally, catalyzes the condensation reaction of fatty acid synthesis by the addition to an acyl acceptor of two carbons from malonyl-ACP. Catalyzes the first condensation reaction which initiates fatty acid synthesis and may therefore play a role in governing the total rate of fatty acid production. Possesses both acetoacetyl-ACP synthase and acetyl transacylase activities. Its substrate specificity determines the biosynthesis of branched-chain and/or straight-chain of fatty acids. The chain is Beta-ketoacyl-[acyl-carrier-protein] synthase III from Ehrlichia ruminantium (strain Gardel).